A 478-amino-acid chain; its full sequence is MSAITITTAKTLYDKLWDAHLVSQRDDGSSLIYIDRHLLHEVTSPQAFEGLALANREPWRLSANIATPDHNVPTVRKERLEGVSGIKDEVSRLQVKTLDDNCVKFNIAEFTINDVRQGIVHVVGPEQGLVLPGMTVVCGDSHTATHGALGCLAHGIGTSEVEHVLATQCLVQKKSKNMLIRVNGELGAGVTAKDVVLAIIAKIGTAGGTGYAIEFAGEVFENMSMEGRMTVCNMAIEAGARVGMVGVDETTIEYVKGRPFAPTGEQWDQAVEYWNTLHSDEGAHFDAIVELDASDIAPQVSWGTSPEMVVDVTQYVPTLAQAKDEVQAEAWERAYQYMGLEQGQPITDIKLDRIFIGSCTNSRIEDLRSAASVIKGRKVAANVKEAIVVAGSGQVKQQAEQEGLDKLFIEAGFEWREPGCSMCLAMNADKLEPQEHCASTSNRNFEGRQGNGGRTHLVSPAMAAAAALAGHFVDVRSF.

[4Fe-4S] cluster contacts are provided by cysteine 359, cysteine 420, and cysteine 423.

The protein belongs to the aconitase/IPM isomerase family. LeuC type 1 subfamily. As to quaternary structure, heterodimer of LeuC and LeuD. The cofactor is [4Fe-4S] cluster.

The enzyme catalyses (2R,3S)-3-isopropylmalate = (2S)-2-isopropylmalate. It functions in the pathway amino-acid biosynthesis; L-leucine biosynthesis; L-leucine from 3-methyl-2-oxobutanoate: step 2/4. Catalyzes the isomerization between 2-isopropylmalate and 3-isopropylmalate, via the formation of 2-isopropylmaleate. This chain is 3-isopropylmalate dehydratase large subunit, found in Psychrobacter sp. (strain PRwf-1).